Here is a 777-residue protein sequence, read N- to C-terminus: Cyclin-F (777 aa).

The Nuclear localization signal 1 signature appears at K20–R28. One can recognise an F-box domain in the interval N29–A76. The 118-residue stretch at Q288–I405 folds into the Cyclin N-terminal domain. 3 consecutive short sequence motifs (d box) follow at residues R310–L313, R343–L346, and R349–L352. Disordered stretches follow at residues Q544 to A591 and Q651 to S777. The Nuclear localization signal 2 signature appears at R568–R574. Residues R582–K761 are PEST. Low complexity-rich tracts occupy residues S695–S708 and S719–T731. A compositionally biased stretch (polar residues) spans P751 to V767. A D box 4 motif is present at residues R762–L765. The segment covering H768–S777 has biased composition (basic and acidic residues).

This sequence belongs to the cyclin family. Cyclin AB subfamily. In terms of assembly, component of the SCF(CCNF) complex consisting of CUL1, RBX1, SKP1 and CCNF. Interacts with SKP1. Interacts with CUL1. Interacts with CCNB1; interaction is required for nuclear localization of CCNB1. Interacts with CCP110; this interaction leads to CCP110 ubiquitination and degradation via the proteasome pathway. Interacts (via the Cyclin N-terminal domain) with MYBL2/BMYB. Interacts with FZR1/CDH1 (via N-terminus). Interacts with RRM2 (via Cy motif and when phosphorylated at 'Thr-33'); the interaction occurs exclusively in G2 and early M. Interacts with CDC6 (via Cy motif); the interaction takes place during G2 and M phase. In terms of processing, degraded when the spindle assembly checkpoint is activated during the G2-M transition. Degradation is not dependent on the proteasome or ubiquitin and depends on the C-terminal PEST sequence. Post-translationally, phosphorylated just before cells enter into mitosis. Ubiquitinated by the anaphase-promoting complex (APC/C); leading to its degradation by the proteasome.

It localises to the nucleus. It is found in the cytoplasm. Its subcellular location is the perinuclear region. The protein resides in the cytoskeleton. The protein localises to the microtubule organizing center. It localises to the centrosome. It is found in the centriole. In terms of biological role, substrate recognition component of a SCF (SKP1-CUL1-F-box protein) E3 ubiquitin-protein ligase complex which mediates the ubiquitination and subsequent proteasomal degradation of target proteins. The SCF(CCNF) E3 ubiquitin-protein ligase complex is an integral component of the ubiquitin proteasome system (UPS) and links proteasome degradation to the cell cycle. Mediates the substrate recognition and the proteasomal degradation of various target proteins involved in the regulation of cell cycle progression and in the maintenance of genome stability. Mediates the ubiquitination and subsequent proteasomal degradation of CP110 during G2 phase, thereby acting as an inhibitor of centrosome reduplication. In G2, mediates the ubiquitination and proteasomal degradation of CDC6, thereby suppressing DNA re-replication and preventing genome instability. Involved in the ubiquitination and degradation of the substrate adapter CDH1 of the anaphase-promoting complex (APC/C), thereby acting as an antagonist of APC/C in regulating G1 progression and S phase entry. May play a role in the G2 cell cycle checkpoint control after DNA damage, possibly by promoting the ubiquitination of MYBL2/BMYB. The chain is Cyclin-F (Ccnf) from Mus musculus (Mouse).